The sequence spans 382 residues: Succinate--CoA ligase [ADP-forming] subunit beta 1 (382 aa).

In terms of domain architecture, ATP-grasp spans 9–235; it reads KQIFAKHGIR…ATEEDPLERE (227 aa). ATP is bound by residues K45, 52–54, E91, L94, and E99; that span reads GRG. Mg(2+)-binding residues include N191 and D204. Substrate is bound at residue N255.

The protein belongs to the succinate/malate CoA ligase beta subunit family. Heterotetramer of two alpha and two beta subunits. Mg(2+) is required as a cofactor.

The catalysed reaction is succinate + ATP + CoA = succinyl-CoA + ADP + phosphate. It carries out the reaction GTP + succinate + CoA = succinyl-CoA + GDP + phosphate. It participates in carbohydrate metabolism; tricarboxylic acid cycle; succinate from succinyl-CoA (ligase route): step 1/1. Succinyl-CoA synthetase functions in the citric acid cycle (TCA), coupling the hydrolysis of succinyl-CoA to the synthesis of either ATP or GTP and thus represents the only step of substrate-level phosphorylation in the TCA. The beta subunit provides nucleotide specificity of the enzyme and binds the substrate succinate, while the binding sites for coenzyme A and phosphate are found in the alpha subunit. This Archaeoglobus fulgidus (strain ATCC 49558 / DSM 4304 / JCM 9628 / NBRC 100126 / VC-16) protein is Succinate--CoA ligase [ADP-forming] subunit beta 1.